Reading from the N-terminus, the 282-residue chain is Small ribosomal subunit protein uS3 (282 aa).

The 69-residue stretch at 43–111 (IRRLMSKGME…QVQLNILEVK (69 aa)) folds into the KH type-2 domain. The segment at 217-282 (AQSQAAAPRA…IGKGSNGTEA (66 aa)) is disordered. A compositionally biased stretch (basic and acidic residues) spans 228–240 (RRNERGDRPDRGA). The segment covering 256 to 269 (AVATGSAPTGTAAT) has biased composition (low complexity).

The protein belongs to the universal ribosomal protein uS3 family. Part of the 30S ribosomal subunit. Forms a tight complex with proteins S10 and S14.

Binds the lower part of the 30S subunit head. Binds mRNA in the 70S ribosome, positioning it for translation. This Kineococcus radiotolerans (strain ATCC BAA-149 / DSM 14245 / SRS30216) protein is Small ribosomal subunit protein uS3.